The sequence spans 242 residues: UPF0246 protein SPH_1662 (242 aa).

This sequence belongs to the UPF0246 family.

The chain is UPF0246 protein SPH_1662 from Streptococcus pneumoniae (strain Hungary19A-6).